A 498-amino-acid polypeptide reads, in one-letter code: Glycerol kinase (498 aa).

Thr12 serves as a coordination point for ADP. ATP contacts are provided by Thr12, Thr13, and Ser14. Thr12 is a sn-glycerol 3-phosphate binding site. Position 16 (Arg16) interacts with ADP. The sn-glycerol 3-phosphate site is built by Arg82, Glu83, Tyr135, and Asp245. 5 residues coordinate glycerol: Arg82, Glu83, Tyr135, Asp245, and Gln246. The ADP site is built by Thr267 and Gly310. Residues Thr267, Gly310, Gln314, and Gly411 each coordinate ATP. ADP contacts are provided by Gly411 and Asn415.

The protein belongs to the FGGY kinase family. In terms of assembly, homotetramer and homodimer (in equilibrium).

The catalysed reaction is glycerol + ATP = sn-glycerol 3-phosphate + ADP + H(+). It participates in polyol metabolism; glycerol degradation via glycerol kinase pathway; sn-glycerol 3-phosphate from glycerol: step 1/1. With respect to regulation, activated by phosphorylation and inhibited by fructose 1,6-bisphosphate (FBP). Functionally, key enzyme in the regulation of glycerol uptake and metabolism. Catalyzes the phosphorylation of glycerol to yield sn-glycerol 3-phosphate. This is Glycerol kinase from Clostridium botulinum (strain Eklund 17B / Type B).